Consider the following 310-residue polypeptide: Oxygen-dependent coproporphyrinogen-III oxidase (310 aa).

S92 is a binding site for substrate. The a divalent metal cation site is built by H96 and H106. H106 serves as the catalytic Proton donor. N108 to R110 contacts substrate. The a divalent metal cation site is built by H145 and H175. Residues Y240–E275 are important for dimerization. G258–R260 is a substrate binding site.

This sequence belongs to the aerobic coproporphyrinogen-III oxidase family. In terms of assembly, homodimer. It depends on a divalent metal cation as a cofactor.

It is found in the cytoplasm. The catalysed reaction is coproporphyrinogen III + O2 + 2 H(+) = protoporphyrinogen IX + 2 CO2 + 2 H2O. It participates in porphyrin-containing compound metabolism; protoporphyrin-IX biosynthesis; protoporphyrinogen-IX from coproporphyrinogen-III (O2 route): step 1/1. Its function is as follows. Involved in the heme biosynthesis. Catalyzes the aerobic oxidative decarboxylation of propionate groups of rings A and B of coproporphyrinogen-III to yield the vinyl groups in protoporphyrinogen-IX. The sequence is that of Oxygen-dependent coproporphyrinogen-III oxidase from Pectobacterium atrosepticum (strain SCRI 1043 / ATCC BAA-672) (Erwinia carotovora subsp. atroseptica).